Here is a 702-residue protein sequence, read N- to C-terminus: Polyribonucleotide nucleotidyltransferase (702 aa).

Residues aspartate 485 and aspartate 491 each coordinate Mg(2+). Residues 552–611 (PKTSTLQIDPEKIRDVIGAGGKVINKIIADTGVKIDIKEDGLVYVSSAESEGVKEAVKII) enclose the KH domain. The S1 motif domain occupies 621 to 689 (GEIYLGKVTK…SQGRINLSRK (69 aa)).

Belongs to the polyribonucleotide nucleotidyltransferase family. Mg(2+) serves as cofactor.

It localises to the cytoplasm. It catalyses the reaction RNA(n+1) + phosphate = RNA(n) + a ribonucleoside 5'-diphosphate. Involved in mRNA degradation. Catalyzes the phosphorolysis of single-stranded polyribonucleotides processively in the 3'- to 5'-direction. The sequence is that of Polyribonucleotide nucleotidyltransferase from Clostridium perfringens (strain ATCC 13124 / DSM 756 / JCM 1290 / NCIMB 6125 / NCTC 8237 / Type A).